We begin with the raw amino-acid sequence, 158 residues long: NADH-quinone oxidoreductase subunit B 2 (158 aa).

Residues cysteine 37, cysteine 38, cysteine 102, and cysteine 132 each coordinate [4Fe-4S] cluster.

It belongs to the complex I 20 kDa subunit family. As to quaternary structure, NDH-1 is composed of 14 different subunits. Subunits NuoB, C, D, E, F, and G constitute the peripheral sector of the complex. The cofactor is [4Fe-4S] cluster.

The protein resides in the cell inner membrane. It carries out the reaction a quinone + NADH + 5 H(+)(in) = a quinol + NAD(+) + 4 H(+)(out). Its function is as follows. NDH-1 shuttles electrons from NADH, via FMN and iron-sulfur (Fe-S) centers, to quinones in the respiratory chain. Couples the redox reaction to proton translocation (for every two electrons transferred, four hydrogen ions are translocated across the cytoplasmic membrane), and thus conserves the redox energy in a proton gradient. The polypeptide is NADH-quinone oxidoreductase subunit B 2 (Acidithiobacillus ferrooxidans (strain ATCC 53993 / BNL-5-31) (Leptospirillum ferrooxidans (ATCC 53993))).